The sequence spans 107 residues: RecQ-mediated genome instability protein 2 homolog (107 aa).

It belongs to the RMI2 family. In terms of assembly, component of the RMI complex, containing at least top-3, rmh-1 and rmh-2. Component of the BTR double Holliday Junction dissolution complex composed of at least him-6, top-3, rmh-1 and rmif-2, which is involved in double strand break repair in the germline. Interacts with rmh-1; the interaction is direct and is required for mutual stability and localization at nuclear foci. Expressed in the germline.

Its subcellular location is the nucleus. Essential component of the RMI complex, a complex that plays an important role in the processing of homologous recombination intermediates. Component of the BTR double Holliday Junction dissolution complex, which is involved in homologous recombination during meiotic double strand break in the germline. Plays a role in double strand break repair by positively regulating the accumulation of rad-51 at double strand breaks. Stabilizes and positively regulates the localization of the BTR double Holliday Junction dissolution complex components rmh-1, him-6 and top-3 at nuclear foci during meiotic recombination. Positively regulates meiotic recombination, chiasma formation, and chromosome segregation in meiosis. Positively regulates DNA crossover formation and positioning on chromosome arms (away from the chromosome center) during homologous recombination. In Caenorhabditis elegans, this protein is RecQ-mediated genome instability protein 2 homolog.